The primary structure comprises 304 residues: Aspartate carbamoyltransferase catalytic subunit (304 aa).

Carbamoyl phosphate is bound by residues arginine 54 and threonine 55. Position 83 (lysine 83) interacts with L-aspartate. Positions 104, 132, and 135 each coordinate carbamoyl phosphate. The L-aspartate site is built by arginine 165 and arginine 226. Positions 265 and 266 each coordinate carbamoyl phosphate.

The protein belongs to the aspartate/ornithine carbamoyltransferase superfamily. ATCase family. In terms of assembly, heterooligomer of catalytic and regulatory chains.

The catalysed reaction is carbamoyl phosphate + L-aspartate = N-carbamoyl-L-aspartate + phosphate + H(+). The protein operates within pyrimidine metabolism; UMP biosynthesis via de novo pathway; (S)-dihydroorotate from bicarbonate: step 2/3. Catalyzes the condensation of carbamoyl phosphate and aspartate to form carbamoyl aspartate and inorganic phosphate, the committed step in the de novo pyrimidine nucleotide biosynthesis pathway. This Pyrobaculum neutrophilum (strain DSM 2338 / JCM 9278 / NBRC 100436 / V24Sta) (Thermoproteus neutrophilus) protein is Aspartate carbamoyltransferase catalytic subunit.